Consider the following 240-residue polypeptide: NAD(P)H-hydrate epimerase (240 aa).

Residues 15–224 (AQEIDAELMG…SYNLKLPCYP (210 aa)) form the YjeF N-terminal domain. 66-70 (NQGGD) is a binding site for (6S)-NADPHX. Residues Q67 and D129 each coordinate K(+). Residues 133–139 (GFSFHSE) and D162 each bind (6S)-NADPHX. S165 lines the K(+) pocket.

Belongs to the NnrE/AIBP family. The cofactor is K(+).

It localises to the cytoplasm. The protein localises to the mitochondrion. The catalysed reaction is (6R)-NADHX = (6S)-NADHX. It carries out the reaction (6R)-NADPHX = (6S)-NADPHX. Its function is as follows. Catalyzes the epimerization of the S- and R-forms of NAD(P)HX, a damaged form of NAD(P)H that is a result of enzymatic or heat-dependent hydration. This is a prerequisite for the S-specific NAD(P)H-hydrate dehydratase to allow the repair of both epimers of NAD(P)HX. The chain is NAD(P)H-hydrate epimerase from Puccinia graminis f. sp. tritici (strain CRL 75-36-700-3 / race SCCL) (Black stem rust fungus).